The primary structure comprises 485 residues: Ulvan lyase (485 aa).

Positions Met-1–Gly-33 are cleaved as a signal peptide. The N-palmitoyl cysteine moiety is linked to residue Cys-34. Cys-34 carries S-diacylglycerol cysteine lipidation. Asn-64 and Asn-126 together coordinate substrate. The interval Phe-108 to Gly-128 is disordered. Over residues Leu-115–Gly-128 the composition is skewed to basic and acidic residues. The active-site Proton donor is His-127. 2 residues coordinate substrate: Lys-129 and His-147. Catalysis depends on Tyr-192, which acts as the Proton acceptor. Substrate-binding residues include Arg-208, His-212, and Tyr-250. His-212 is a Zn(2+) binding site. Zn(2+) is bound by residues His-268, Cys-270, and His-282. His-282 contributes to the substrate binding site.

It belongs to the polysaccharide lyase 25 family.

It localises to the cell membrane. Functionally, ulvan lyase involved in ulvan degradation. Ulvan is the main polysaccharide component of the Ulvales (green seaweed) cell wall. It is composed of disaccharide building blocks comprising 3-sulfated rhamnose (Rha3S) linked to D-glucuronic acid (GlcA), L-iduronic acid (IduA), or D-xylose (Xyl). Ulvan lyase catalyzes the endolytic cleavage of the glycosidic bond between Rha3S and the uronic acids GlcA or IduA, producing oligosaccharides that have unsaturated 4-deoxy-L-threo-hex-4-enopyranosiduronic acid (deltaUA) at the non-reducing end. This results eventually in the degradation of the ulvan polysaccharide into deltaUA-Rha3S disaccharides and deltaUA-Rha3S-Xyl-Rha3S tetrasaccharides. This chain is Ulvan lyase, found in Alteromonas sp. (strain LOR).